Here is a 592-residue protein sequence, read N- to C-terminus: Transmembrane 9 superfamily member 2 (592 aa).

The N-terminal stretch at 1 to 24 (MRTPTTILLLVGAILFSGAGYVRS) is a signal peptide. Over 25 to 229 (DASDHRYKEG…SLPHHLEIHW (205 aa)) the chain is Lumenal. Residues 230 to 250 (FSIINSCVTVLLLTGFLATIL) form a helical membrane-spanning segment. Topologically, residues 251-302 (MRVLKNDFMKYAQDEEAADDQEETGWKYIHGDVFRFPTHNSLFAASLGSGTQ) are cytoplasmic. A helical transmembrane segment spans residues 303 to 323 (LFTLTIFIFMLALVGVFYPYN). Residue R324 is a topological domain, lumenal. A helical transmembrane segment spans residues 325-345 (GALFTALVVIYALTSGIAGYT). The Cytoplasmic portion of the chain corresponds to 346–362 (SASFYCQLEGKSWVRNL). The chain crosses the membrane as a helical span at residues 363–383 (LLTGCLFCGPLFLTFCFLNTV). At 384 to 397 (AITYTATAALPFGT) the chain is on the lumenal side. A helical membrane pass occupies residues 398–418 (IVVIVLIWTLVTSPLLVLGGI). Residues 419 to 452 (AGKNSKAEFQAPCRTTKYPREIPPLPWYRSAIPQ) lie on the Cytoplasmic side of the membrane. A helical transmembrane segment spans residues 453–473 (MAMAGFLPFSAIYIELYYIFA). Residues 474–485 (SVWGHRIYTIYS) lie on the Lumenal side of the membrane. A helical membrane pass occupies residues 486–506 (ILFIVFIILIIVTAFITVALT). The Cytoplasmic portion of the chain corresponds to 507–521 (YFQLAAEDHQWWWRS). Residues 522 to 542 (FLCGGSTGLFIYAYCLYYYYA) form a helical membrane-spanning segment. At 543–553 (RSDMSGFMQTS) the chain is on the lumenal side. The chain crosses the membrane as a helical span at residues 554-574 (FFFGYMACICYGFFLMLGTVG). At 575–592 (FRAALLFVRHIYRSIKCE) the chain is on the cytoplasmic side. Positions 581 to 586 (FVRHIY) match the Endoplasmic reticulum export signal motif. The Golgi retention signal signature appears at 590–592 (KCE).

It belongs to the nonaspanin (TM9SF) (TC 9.A.2) family.

It localises to the endosome membrane. It is found in the golgi apparatus membrane. This chain is Transmembrane 9 superfamily member 2, found in Arabidopsis thaliana (Mouse-ear cress).